Here is a 630-residue protein sequence, read N- to C-terminus: tRNA uridine 5-carboxymethylaminomethyl modification enzyme MnmG (630 aa).

FAD-binding positions include 13–18 (GGGHAG), valine 125, and serine 180. 273–287 (GPRYCPSIEDKIHRF) serves as a coordination point for NAD(+). Glutamine 370 contributes to the FAD binding site.

Belongs to the MnmG family. As to quaternary structure, homodimer. Heterotetramer of two MnmE and two MnmG subunits. FAD is required as a cofactor.

The protein resides in the cytoplasm. Its function is as follows. NAD-binding protein involved in the addition of a carboxymethylaminomethyl (cmnm) group at the wobble position (U34) of certain tRNAs, forming tRNA-cmnm(5)s(2)U34. The polypeptide is tRNA uridine 5-carboxymethylaminomethyl modification enzyme MnmG (Shewanella woodyi (strain ATCC 51908 / MS32)).